Consider the following 283-residue polypeptide: Probable voltage-dependent anion-selective channel (283 aa).

This sequence belongs to the eukaryotic mitochondrial porin family.

Its subcellular location is the mitochondrion outer membrane. Its function is as follows. Forms a channel through the cell membrane that allows diffusion of small hydrophilic molecules. Plays a role in maintaining mitochondrial morphology. The protein is Probable voltage-dependent anion-selective channel of Caenorhabditis elegans.